Here is a 643-residue protein sequence, read N- to C-terminus: MSRPSTPLLDKAPTPDRLRALPEQDLPQLAEELRTELIDAVSTTGGHLGAGLGVVELTVALHHVFNTPYDRIIWDVGHQAYPHKILTGRRDRIRTLRQAGGLSGFTKRAESEYDPFGAAHSSTSISAGLGMAVASELSGEKRNVIAVIGDGSMSAGMAYEAMNNAGALDARLIVILNDNDMSIAPPTGAMSAYLARLVSGRTYRSVREAAKQVAQKLPKFLQDKARKSEEYARAFFTGGTLFEELGFYYVGPIDGHNLDHLLPVLKNVRDTQKGPVLIHVVTQKGKGYAPAEAAADKYHGVNKFDVITGKQAKPPANAPSYTKIFGTSLIEEARHDDKIVAVTAAMPTGTGLDLFGEAFPKRVFDVGIAEQHAVTFAAGLASEGYKPFCAIYSTFLQRGYDQVVHDVSIQNLPVRFPIDRAGLVGADGPTHAGSFDTGFLAALPGFVVMAASDEAELRHMVRTAAEYDEGPISFRYPRGDGVGVDLPERGSVLEIGKGRIVREGTKVALLSFGTRLQECLAAAEELGAAGLSTTVADARFAKPLDHDLIRRLAREHEVLVMVEEGAVGGFGSHVLQFLATDGLLDRGFKVRALTLPDIYQDHGKPDAMYAEAGLDRTGIVRTVFAALHRDELGHEALPTPFRA.

Residues His-78 and 119-121 contribute to the thiamine diphosphate site; that span reads AHS. Residue Asp-150 coordinates Mg(2+). Residues 151–152, Asn-179, Tyr-288, and Glu-370 contribute to the thiamine diphosphate site; that span reads GS. Asn-179 lines the Mg(2+) pocket.

The protein belongs to the transketolase family. DXPS subfamily. Homodimer. Requires Mg(2+) as cofactor. It depends on thiamine diphosphate as a cofactor.

The enzyme catalyses D-glyceraldehyde 3-phosphate + pyruvate + H(+) = 1-deoxy-D-xylulose 5-phosphate + CO2. The protein operates within metabolic intermediate biosynthesis; 1-deoxy-D-xylulose 5-phosphate biosynthesis; 1-deoxy-D-xylulose 5-phosphate from D-glyceraldehyde 3-phosphate and pyruvate: step 1/1. Functionally, catalyzes the acyloin condensation reaction between C atoms 2 and 3 of pyruvate and glyceraldehyde 3-phosphate to yield 1-deoxy-D-xylulose-5-phosphate (DXP). The chain is 1-deoxy-D-xylulose-5-phosphate synthase from Brucella melitensis biotype 2 (strain ATCC 23457).